The chain runs to 460 residues: Putative arginine/ornithine antiporter (460 aa).

Residues 1–4 lie on the Cytoplasmic side of the membrane; the sequence is MEKK. The chain crosses the membrane as a helical span at residues 5–25; that stretch reads LGLSALTALVLSSMLGAGVFS. The Periplasmic portion of the chain corresponds to 26–38; the sequence is LPQNMAAVASPAA. The chain crosses the membrane as a helical span at residues 39 to 59; it reads LLIGWGITGAGILLLAFAMLI. Over 60-92 the chain is Cytoplasmic; sequence LTRIRPELDGGIFTYAREGFGELIGFCSAWGYW. A helical transmembrane segment spans residues 93 to 113; the sequence is LCAVIANVSYLVIVFSALSFF. Residues 114–125 lie on the Periplasmic side of the membrane; that stretch reads TDTPELRLFGDG. A helical membrane pass occupies residues 126–146; sequence NTWQSIVGASALLWIVHFLIL. Residues 147–157 are Cytoplasmic-facing; the sequence is RGVQTAASINL. A helical transmembrane segment spans residues 158–178; the sequence is VATLAKLLPLGLFVVLAMMMF. Topologically, residues 179–201 are periplasmic; sequence KLDTFKLDFTGLALGVPVWEQVK. Residues 202–222 traverse the membrane as a helical segment; it reads NTMLITLWVFIGVEGAVVVSA. Residues 223-235 lie on the Cytoplasmic side of the membrane; that stretch reads RARNKRDVGKATL. The helical transmembrane segment at 236 to 256 threads the bilayer; it reads LAVLSALGVYLLVTLLSLGVV. At 257 to 282 the chain is on the periplasmic side; the sequence is ARPELAEIRNPSMAGLMVEMMGPWGE. The helical transmembrane segment at 283–303 threads the bilayer; sequence IIIAAGLIVSVCGAYLSWTIM. The Cytoplasmic portion of the chain corresponds to 304 to 331; that stretch reads AAEVPFLAATHKAFPRIFARQNAQAAPS. Residues 332–352 traverse the membrane as a helical segment; it reads ASLWLTNICVQICLVLIWLTG. The Periplasmic segment spans residues 353–357; the sequence is SDYNT. The chain crosses the membrane as a helical span at residues 358-378; the sequence is LLTIASEMILVPYFLVGAFLL. The Cytoplasmic segment spans residues 379 to 384; that stretch reads KIATRP. Transmembrane regions (helical) follow at residues 385-405 and 406-426; these read LHKAVGVGACIYGLWLLYASG and PMHLLLSVVLYAPGLLVFLYA. Topologically, residues 427-439 are cytoplasmic; sequence RKTHTHDNVLNRQ. A helical transmembrane segment spans residues 440–460; it reads EMVLIGMLLIASVPATWMLVG.

It belongs to the amino acid-polyamine-organocation (APC) superfamily. Basic amino acid/polyamine antiporter (APA) (TC 2.A.3.2) family.

It localises to the cell inner membrane. It carries out the reaction L-ornithine(in) + L-arginine(out) = L-ornithine(out) + L-arginine(in). Its function is as follows. Catalyzes electroneutral exchange between arginine and ornithine to allow high-efficiency energy conversion in the arginine deiminase pathway. In Escherichia coli O6:H1 (strain CFT073 / ATCC 700928 / UPEC), this protein is Putative arginine/ornithine antiporter (ydgI).